The following is a 119-amino-acid chain: Small ribosomal subunit protein bS6 (119 aa).

This sequence belongs to the bacterial ribosomal protein bS6 family.

Binds together with bS18 to 16S ribosomal RNA. The sequence is that of Small ribosomal subunit protein bS6 from Buchnera aphidicola subsp. Baizongia pistaciae (strain Bp).